Here is a 284-residue protein sequence, read N- to C-terminus: 2-dehydro-3-deoxyphosphooctonate aldolase (284 aa).

It belongs to the KdsA family.

The protein resides in the cytoplasm. It catalyses the reaction D-arabinose 5-phosphate + phosphoenolpyruvate + H2O = 3-deoxy-alpha-D-manno-2-octulosonate-8-phosphate + phosphate. It functions in the pathway carbohydrate biosynthesis; 3-deoxy-D-manno-octulosonate biosynthesis; 3-deoxy-D-manno-octulosonate from D-ribulose 5-phosphate: step 2/3. It participates in bacterial outer membrane biogenesis; lipopolysaccharide biosynthesis. The sequence is that of 2-dehydro-3-deoxyphosphooctonate aldolase from Pectobacterium carotovorum subsp. carotovorum (strain PC1).